We begin with the raw amino-acid sequence, 813 residues long: Tax1-binding protein 1 homolog (813 aa).

Phosphoserine is present on residues Ser124, Ser138, and Ser225. Residues 144-596 (TTKAGLLELK…SYSLQLAEKD (453 aa)) adopt a coiled-coil conformation. Residues 320 to 420 (EEIGKLQSCL…ELQLHAVKTD (101 aa)) form an oligomerization region. Ser618 bears the Phosphoserine; by IKKA mark. Ser631 carries the phosphoserine modification. The tract at residues 667–732 (AHETRDGADG…NVPIPPDPAN (66 aa)) is disordered. At Ser692 the chain carries Phosphoserine; by IKKA. 2 consecutive UBZ1-type zinc fingers follow at residues 751-777 (HKKC…VESH) and 778-804 (WKVC…VQTH). The Zn(2+) site is built by Cys754, Cys757, His773, His777, Cys781, Cys784, His800, and His804.

In terms of assembly, homooligomer. Interacts with TNFAIP3. Interacts with STARD13. Interacts with MYO6. Interacts with TOM1; the interaction is indirect and is mediated by MYO6, which acts as a bridge between TOM1 and TAX1BP1. Interacts with MAVS; this interaction induces MAVS polyubiquitination. Interacts with TNIP1. Interacts with TRAF6; this interaction mediates deubiquitination of TRAF6 and inhibition of NF-kappa-B activation. Interacts with RIPK1; this interaction negatively regulates RIPK1 ubiquitination. Interacts with NBR1. Interacts with TBK1. Interacts with RB1CC1. Interacts with SQSTM1. Interacts with AZI2. Interacts with TICAM1 and TRIM32; these interactions target TICAM1 to TAX1BP1-mediated selective autophagic degradation. In terms of processing, phosphorylated in the C-terminal region by CHUK/IKKA leading to NF-kappa-B signaling down-regulation.

The protein localises to the cytoplasm. It is found in the mitochondrion. The protein resides in the preautophagosomal structure. Its subcellular location is the cytoplasmic vesicle. It localises to the autophagosome. Functionally, ubiquitin-binding adapter that participates in inflammatory, antiviral and innate immune processes as well as selective autophagy regulation. Plays a key role in the negative regulation of NF-kappa-B and IRF3 signalings by acting as an adapter for the ubiquitin-editing enzyme A20/TNFAIP3 to bind and inactivate its substrates. Disrupts the interactions between the E3 ubiquitin ligase TRAF3 and TBK1/IKBKE to attenuate 'Lys63'-linked polyubiquitination of TBK1 and thereby IFN-beta production. Also recruits A20/TNFAIP3 to ubiquitinated signaling proteins TRAF6 and RIPK1, leading to their deubiquitination and disruption of IL-1 and TNF-induced NF-kappa-B signaling pathways. Inhibits virus-induced apoptosis by inducing the 'Lys-48'-linked polyubiquitination and degradation of MAVS via recruitment of the E3 ligase ITCH, thereby attenuating MAVS-mediated apoptosis signaling. As a macroautophagy/autophagy receptor, facilitates the xenophagic clearance of pathogenic bacteria such as Salmonella typhimurium and Mycobacterium tuberculosis. Upon NBR1 recruitment to the SQSTM1-ubiquitin condensates, acts as the major recruiter of RB1CC1 to these ubiquitin condensates to promote their autophagic degradation. Mediates the autophagic degradation of other substrates including TICAM1. The sequence is that of Tax1-binding protein 1 homolog (Tax1bp1) from Rattus norvegicus (Rat).